A 291-amino-acid chain; its full sequence is N-acetylmannosamine kinase (291 aa).

ATP-binding positions include 5-12 (AIDIGGTK) and 132-139 (GVGGGVVS). Zn(2+) contacts are provided by histidine 156, cysteine 166, cysteine 168, and cysteine 173.

This sequence belongs to the ROK (NagC/XylR) family. NanK subfamily. As to quaternary structure, homodimer.

It carries out the reaction an N-acyl-D-mannosamine + ATP = an N-acyl-D-mannosamine 6-phosphate + ADP + H(+). Its pathway is amino-sugar metabolism; N-acetylneuraminate degradation; D-fructose 6-phosphate from N-acetylneuraminate: step 2/5. Catalyzes the phosphorylation of N-acetylmannosamine (ManNAc) to ManNAc-6-P. The polypeptide is N-acetylmannosamine kinase (nanK1) (Escherichia coli O6:H1 (strain CFT073 / ATCC 700928 / UPEC)).